We begin with the raw amino-acid sequence, 149 residues long: Protein FAM72A (149 aa).

Belongs to the FAM72 family. Interacts with UNG. As to expression, may be up-regulated in malignant colon cancers, compared to normal colon and colon adenomas. Expression is also elevated in other common cancer types, including breast, lung, uterus, and ovary.

It is found in the cytoplasm. The protein localises to the mitochondrion. Its function is as follows. May play a role in the regulation of cellular reactive oxygen species metabolism. May participate in cell growth regulation. The sequence is that of Protein FAM72A (FAM72A) from Homo sapiens (Human).